Reading from the N-terminus, the 78-residue chain is Large ribosomal subunit protein bL28 (78 aa).

The segment at 1 to 25 is disordered; sequence MSRVCQVTGKRPTVGNNRSHAKNAT.

It belongs to the bacterial ribosomal protein bL28 family.

The sequence is that of Large ribosomal subunit protein bL28 from Tolumonas auensis (strain DSM 9187 / NBRC 110442 / TA 4).